The primary structure comprises 185 residues: Large ribosomal subunit protein uL5 (185 aa).

It belongs to the universal ribosomal protein uL5 family. As to quaternary structure, part of the 50S ribosomal subunit; part of the 5S rRNA/L5/L18/L25 subcomplex. Contacts the 5S rRNA and the P site tRNA. Forms a bridge to the 30S subunit in the 70S ribosome.

Functionally, this is one of the proteins that bind and probably mediate the attachment of the 5S RNA into the large ribosomal subunit, where it forms part of the central protuberance. In the 70S ribosome it contacts protein S13 of the 30S subunit (bridge B1b), connecting the 2 subunits; this bridge is implicated in subunit movement. Contacts the P site tRNA; the 5S rRNA and some of its associated proteins might help stabilize positioning of ribosome-bound tRNAs. This is Large ribosomal subunit protein uL5 from Treponema pallidum (strain Nichols).